The primary structure comprises 590 residues: Potassium-transporting ATPase potassium-binding subunit (590 aa).

Helical transmembrane passes span 11 to 31 (IFIA…AAVF), 64 to 84 (TAYC…TYLI), 136 to 156 (GLAT…IAFI), 178 to 198 (ILWV…SQGV), 273 to 293 (MLEM…LGQM), 301 to 321 (WAVL…CYWA), 403 to 423 (AGLY…GLMV), 442 to 462 (AMLY…VAVL), 511 to 531 (LGFA…ALAG), and 552 to 572 (LFTV…FLPA).

Belongs to the KdpA family. As to quaternary structure, the system is composed of three essential subunits: KdpA, KdpB and KdpC.

It localises to the cell inner membrane. Part of the high-affinity ATP-driven potassium transport (or Kdp) system, which catalyzes the hydrolysis of ATP coupled with the electrogenic transport of potassium into the cytoplasm. This subunit binds the periplasmic potassium ions and delivers the ions to the membrane domain of KdpB through an intramembrane tunnel. The polypeptide is Potassium-transporting ATPase potassium-binding subunit (Acidobacterium capsulatum (strain ATCC 51196 / DSM 11244 / BCRC 80197 / JCM 7670 / NBRC 15755 / NCIMB 13165 / 161)).